Here is a 762-residue protein sequence, read N- to C-terminus: Probable disease resistance protein At1g61300 (762 aa).

Gly-2 carries N-myristoyl glycine lipidation. Residues Cys-3 and Cys-4 are each lipidated (S-palmitoyl cysteine). One can recognise an NB-ARC domain in the interval 26–329 (NINRNSFGVE…CEGFIGEDQV (304 aa)). ATP is bound at residue 68–75 (GMGGVGKT). LRR repeat units follow at residues 401 to 422 (AVRR…SKCS), 423 to 444 (ELTT…FIRY), 447 to 470 (KLVV…SGLV), 471 to 493 (SLQF…KKLK), and 494 to 516 (KLTF…SRLL).

Belongs to the disease resistance NB-LRR family.

The protein resides in the cell membrane. Its function is as follows. Probable disease resistance protein. The protein is Probable disease resistance protein At1g61300 of Arabidopsis thaliana (Mouse-ear cress).